Consider the following 333-residue polypeptide: Serine/threonine-protein phosphatase 4 catalytic subunit 1 (333 aa).

A disordered region spans residues 1 to 29 (MALAVADTQNETFARSESPTSGPSDQLST). Residues 7-27 (DTQNETFARSESPTSGPSDQL) show a composition bias toward polar residues. Mn(2+) contacts are provided by Asp-79, His-81, Asp-107, and Asn-139. His-140 (proton donor) is an active-site residue. Positions 189 and 264 each coordinate Mn(2+). Leu-333 is modified (leucine methyl ester).

This sequence belongs to the PPP phosphatase family. PP-4 (PP-X) subfamily. Serine/threonine-protein phosphatase 4 (PP4) occurs in different assemblies of the catalytic and one or more regulatory subunits. The regulatory subunits are likely to be ppfr-1, ppfr-2, ppfr-4 and smk-1. Interacts with mei-1. Mn(2+) is required as a cofactor. In terms of processing, methylation at the C-terminal Leu-333 is critical for interactions with regulatory subunits.

Its subcellular location is the cytoplasm. The protein resides in the cytoskeleton. It is found in the microtubule organizing center. The protein localises to the centrosome. It carries out the reaction O-phospho-L-seryl-[protein] + H2O = L-seryl-[protein] + phosphate. The enzyme catalyses O-phospho-L-threonyl-[protein] + H2O = L-threonyl-[protein] + phosphate. Its function is as follows. Protein phosphatase which plays an essential role in meiosis and in early embryonic mitosis. During spermatocyte meiosis and the first embryonic mitosis, regulates centrosome maturation, and thus spindle formation, by recruiting some of the components of the pericentriolar material (PCM). During oocyte meiosis I, regulates meiotic chromosome dynamics including synapsis-independent chromosome pairing, restriction of synapsis to homologous chromosomes, programmed DNA double-strand break initiation and crossover formation resulting in chiasma formation. During oocyte meiosis II and probably together with regulatory subunit ppfr-1, may regulate microtubule severing by dephosphorylating and activating mei-1, a component of the katanin microtubule severing complex. This is Serine/threonine-protein phosphatase 4 catalytic subunit 1 (pph-4.1) from Caenorhabditis briggsae.